A 598-amino-acid chain; its full sequence is Pentatricopeptide repeat-containing protein At5g14820, mitochondrial (598 aa).

Residues 1-98 (MAAAPWLYLS…RGFSSGSSNV (98 aa)) constitute a mitochondrion transit peptide. PPR repeat units lie at residues 193-227 (DSRT…GLLT), 229-261 (ETFT…KFKI), 262-292 (GVET…LKER), 296-330 (NMMT…GLKP), 331-365 (DIVA…GPCP), 366-400 (NVRS…GLQP), 401-435 (DAAV…GHPP), 436-470 (DGKT…EIEP), 471-505 (SIHT…GICP), and 506-540 (DDNS…GMKT).

This sequence belongs to the PPR family. P subfamily.

The protein resides in the mitochondrion. The protein is Pentatricopeptide repeat-containing protein At5g14820, mitochondrial of Arabidopsis thaliana (Mouse-ear cress).